A 312-amino-acid chain; its full sequence is Glycerol 2-dehydrogenase (NADP(+)) (312 aa).

Tyr-56 acts as the Proton donor in catalysis. Substrate is bound at residue His-112. 220-274 (SPLGSTDAPLLKEPVILEIAKKNNVQPGHVVISWHVQRGYVVLPKSVNPDRIKTN) lines the NADP(+) pocket. At Ser-306 the chain carries Phosphoserine.

The protein belongs to the aldo/keto reductase family.

Its subcellular location is the cytoplasm. The catalysed reaction is glycerol + NADP(+) = dihydroxyacetone + NADPH + H(+). Functionally, glycerol dehydrogenase involved in glycerol catabolism under microaerobic conditions. Has mRNA binding activity. This chain is Glycerol 2-dehydrogenase (NADP(+)) (GCY1), found in Saccharomyces cerevisiae (strain ATCC 204508 / S288c) (Baker's yeast).